The chain runs to 328 residues: MLHFAHIFQNKVHTMNITKPFPLPTGYFGIPLGLAALSLAWFHLENLFPAARMVSDVLGIVASAVWILFILMYAYKLRYYFEEVRAEYHSPVRFSFIALIPITTMLVGDILYRWNPLIAEVLIWIGTIGQLLFSTLRVSELWQGGVFEQKSTHPSFYLPAVAANFTSASSLALLGYHDLGYLFFGAGMIAWIIFEPVLLQHLRISSLEPQFRATMGIVLAPAFVCVSAYLSINHGEVDTLAKILWGYGFLQLFFLLRLFPWIVEKGLNIGLWAFSFGLASMANSATAFYHGNVLQGVSIFAFVFSNVMIGLLVLMTIYKLTKGQFFLK.

The Cytoplasmic segment spans residues 1–21 (MLHFAHIFQNKVHTMNITKPF). The chain crosses the membrane as a helical span at residues 22-42 (PLPTGYFGIPLGLAALSLAWF). The Periplasmic portion of the chain corresponds to 43 to 49 (HLENLFP). The helical transmembrane segment at 50-73 (AARMVSDVLGIVASAVWILFILMY) threads the bilayer. At 74-93 (AYKLRYYFEEVRAEYHSPVR) the chain is on the cytoplasmic side. A helical transmembrane segment spans residues 94-112 (FSFIALIPITTMLVGDILY). Residues 113–115 (RWN) are Periplasmic-facing. A helical transmembrane segment spans residues 116 to 141 (PLIAEVLIWIGTIGQLLFSTLRVSEL). The Cytoplasmic portion of the chain corresponds to 142 to 153 (WQGGVFEQKSTH). A helical membrane pass occupies residues 154-174 (PSFYLPAVAANFTSASSLALL). Over 175–176 (GY) the chain is Periplasmic. Residues 177-204 (HDLGYLFFGAGMIAWIIFEPVLLQHLRI) form a helical membrane-spanning segment. Over 205 to 208 (SSLE) the chain is Cytoplasmic. The helical transmembrane segment at 209–232 (PQFRATMGIVLAPAFVCVSAYLSI) threads the bilayer. The Periplasmic segment spans residues 233–238 (NHGEVD). The helical transmembrane segment at 239 to 262 (TLAKILWGYGFLQLFFLLRLFPWI) threads the bilayer. Over 263-268 (VEKGLN) the chain is Cytoplasmic. Residues 269–289 (IGLWAFSFGLASMANSATAFY) traverse the membrane as a helical segment. The Periplasmic segment spans residues 290–294 (HGNVL). A helical membrane pass occupies residues 295–321 (QGVSIFAFVFSNVMIGLLVLMTIYKLT). Over 322–328 (KGQFFLK) the chain is Cytoplasmic.

This sequence belongs to the tellurite-resistance/dicarboxylate transporter (TDT) family. As to quaternary structure, homotrimer. Each subunit forms a channel.

The protein resides in the cell inner membrane. Ion channel involved in potassium tellurite resistance. The chain is Tellurite resistance protein TehA homolog (tehA) from Haemophilus influenzae (strain ATCC 51907 / DSM 11121 / KW20 / Rd).